A 540-amino-acid polypeptide reads, in one-letter code: Chaperonin GroEL (540 aa).

ATP is bound by residues 29–32, 86–90, Gly413, 476–478, and Asp492; these read TLGP, DGTTT, and NAA.

The protein belongs to the chaperonin (HSP60) family. As to quaternary structure, forms a cylinder of 14 subunits composed of two heptameric rings stacked back-to-back. Interacts with the co-chaperonin GroES.

The protein localises to the cytoplasm. The enzyme catalyses ATP + H2O + a folded polypeptide = ADP + phosphate + an unfolded polypeptide.. Together with its co-chaperonin GroES, plays an essential role in assisting protein folding. The GroEL-GroES system forms a nano-cage that allows encapsulation of the non-native substrate proteins and provides a physical environment optimized to promote and accelerate protein folding. The polypeptide is Chaperonin GroEL (Streptococcus gordonii).